The primary structure comprises 182 residues: Epoxyqueuosine reductase QueH (182 aa).

Positions 10, 11, 85, and 88 each coordinate [4Fe-4S] cluster. A disulfide bridge links Cys-165 with Cys-167.

Belongs to the QueH family.

The enzyme catalyses epoxyqueuosine(34) in tRNA + AH2 = queuosine(34) in tRNA + A + H2O. Its pathway is tRNA modification; tRNA-queuosine biosynthesis. In terms of biological role, catalyzes the conversion of epoxyqueuosine (oQ) to queuosine (Q), which is a hypermodified base found in the wobble positions of tRNA(Asp), tRNA(Asn), tRNA(His) and tRNA(Tyr). The chain is Epoxyqueuosine reductase QueH from Dehalococcoides mccartyi (strain ATCC BAA-2266 / KCTC 15142 / 195) (Dehalococcoides ethenogenes (strain 195)).